Consider the following 223-residue polypeptide: Uracil-DNA glycosylase (223 aa).

Asp66 acts as the Proton acceptor in catalysis.

It belongs to the uracil-DNA glycosylase (UDG) superfamily. UNG family.

The protein localises to the cytoplasm. It catalyses the reaction Hydrolyzes single-stranded DNA or mismatched double-stranded DNA and polynucleotides, releasing free uracil.. Functionally, excises uracil residues from the DNA which can arise as a result of misincorporation of dUMP residues by DNA polymerase or due to deamination of cytosine. The sequence is that of Uracil-DNA glycosylase from Sulfurimonas denitrificans (strain ATCC 33889 / DSM 1251) (Thiomicrospira denitrificans (strain ATCC 33889 / DSM 1251)).